We begin with the raw amino-acid sequence, 57 residues long: Small ribosomal subunit protein bS21 (57 aa).

Belongs to the bacterial ribosomal protein bS21 family.

The chain is Small ribosomal subunit protein bS21 from Bacillus pumilus (strain SAFR-032).